We begin with the raw amino-acid sequence, 495 residues long: Two-component response regulator-like APRR3 (495 aa).

The Response regulatory domain maps to 65–183; that stretch reads KVLLVENDDS…ELKNLWQHVW (119 aa). Disordered stretches follow at residues 188–441 and 465–495; these read SSSG…RWAQ and HSRK…SEDN. The span at 206–217 shows a compositional bias: polar residues; sequence PESTQGSENDAS. The span at 231 to 248 shows a compositional bias: low complexity; it reads GLSNQDGGSDNGSGTQSS. Residues 256 to 265 are compositionally biased toward polar residues; that stretch reads TKSTSPSNQF. The segment covering 284-293 has biased composition (basic and acidic residues); that stretch reads RLKEAEDQKE. Residues 294-304 show a composition bias toward polar residues; sequence QIGTGSQTGMS. The segment covering 307-319 has biased composition (basic and acidic residues); sequence KKAEEPGDLEKNA. Positions 335-350 are enriched in polar residues; that stretch reads NRSSGNSQVESKAPSS. Positions 349 to 372 form a coiled coil; the sequence is SSNREDLQSLEQTLKKTREDRDYK. A compositionally biased stretch (basic and acidic residues) spans 351–378; it reads NREDLQSLEQTLKKTREDRDYKVGDRSV. Polar residues-rich tracts occupy residues 380–395 and 420–436; these read RHSN…NGAT and GSSS…SSGS. A CCT domain is found at 442 to 484; the sequence is REAALMKFRLKRKERCFEKKVRYHSRKKLAEQRPHVKGQFIRK. The segment covering 483-495 has biased composition (basic and acidic residues); sequence RKRDDHKSGSEDN.

This sequence belongs to the ARR-like family. As to quaternary structure, interacts with APRR1/TOC1 (via N-terminus). Post-translationally, phosphorylated by WNK1; during the night. Phosphorylation is required for optimal interaction with APRR1/TOC1.

Its subcellular location is the nucleus. Its function is as follows. Controls photoperiodic flowering response. Component of the circadian clock. Controls the degradation of APRR1/TOC1 by the SCF(ZTL) complex. Expression of several members of the ARR-like family is controlled by circadian rhythm. The particular coordinated sequential expression of APRR9, APRR7, APRR5, APRR3 and APPR1 result to circadian waves that may be at the basis of the endogenous circadian clock. This is Two-component response regulator-like APRR3 (APRR3) from Arabidopsis thaliana (Mouse-ear cress).